Reading from the N-terminus, the 456-residue chain is Tyrosinase-like protein (456 aa).

The first 22 residues, 1-22 (MNTMTLLGKVFLLQFLIGVGFC), serve as a signal peptide directing secretion. Residues His145, His154, His163, His295, His299, and His322 each coordinate Cu cation.

It belongs to the tyrosinase family. It depends on Cu(2+) as a cofactor. In terms of tissue distribution, prismatic layer of shell (at protein level).

The protein resides in the secreted. This is Tyrosinase-like protein from Pinctada maxima (Silver-lipped pearl oyster).